Consider the following 769-residue polypeptide: Phosphatidylinositol 4-phosphate 5-kinase 8 (769 aa).

MORN repeat units lie at residues 16 to 38 (YSGQ…DGII), 39 to 61 (YEGD…SGAK), 62 to 84 (YEGD…DGSV), 85 to 107 (YAGA…NSDV), 108 to 130 (YDGS…NGNR), 131 to 153 (FIGN…NGDL), 154 to 176 (FNGF…DGGF), and 177 to 198 (YFGT…AGSK). The tract at residues 266–289 (PPRDFMHHGPSSKSARSVDSGQSE) is disordered. Polar residues predominate over residues 276–288 (SSKSARSVDSGQS). The region spanning 344-765 (WNHYLMLNLQ…RFIDFLLKVF (422 aa)) is the PIPK domain. Residues 725-746 (YNMKKKVEHTCKSMKYDPMTIS) are activation loop.

It carries out the reaction a 1,2-diacyl-sn-glycero-3-phospho-(1D-myo-inositol 4-phosphate) + ATP = a 1,2-diacyl-sn-glycero-3-phospho-(1D-myo-inositol-4,5-bisphosphate) + ADP + H(+). The chain is Phosphatidylinositol 4-phosphate 5-kinase 8 (PIP5K8) from Arabidopsis thaliana (Mouse-ear cress).